Reading from the N-terminus, the 294-residue chain is Acetylglutamate kinase (294 aa).

Residues 67 to 68, Arg89, and Asn191 each bind substrate; that span reads GG.

The protein belongs to the acetylglutamate kinase family. ArgB subfamily.

Its subcellular location is the cytoplasm. The catalysed reaction is N-acetyl-L-glutamate + ATP = N-acetyl-L-glutamyl 5-phosphate + ADP. The protein operates within amino-acid biosynthesis; L-arginine biosynthesis; N(2)-acetyl-L-ornithine from L-glutamate: step 2/4. Its function is as follows. Catalyzes the ATP-dependent phosphorylation of N-acetyl-L-glutamate. This chain is Acetylglutamate kinase, found in Methylobacillus flagellatus (strain ATCC 51484 / DSM 6875 / VKM B-1610 / KT).